The sequence spans 430 residues: Adenylosuccinate synthetase (430 aa).

Residues 12–18 and 40–42 each bind GTP; these read GDEGKGK and GHT. Catalysis depends on aspartate 13, which acts as the Proton acceptor. Residues aspartate 13 and glycine 40 each contribute to the Mg(2+) site. Residues 13–16, 38–41, threonine 128, arginine 142, glutamine 223, threonine 238, and arginine 302 contribute to the IMP site; these read DEGK and NAGH. Catalysis depends on histidine 41, which acts as the Proton donor. 298-304 is a substrate binding site; it reads TTTGRPR. GTP contacts are provided by residues arginine 304, 330 to 332, and 412 to 414; these read LLD and SVG.

This sequence belongs to the adenylosuccinate synthetase family. In terms of assembly, homodimer. It depends on Mg(2+) as a cofactor.

The protein resides in the cytoplasm. The catalysed reaction is IMP + L-aspartate + GTP = N(6)-(1,2-dicarboxyethyl)-AMP + GDP + phosphate + 2 H(+). It functions in the pathway purine metabolism; AMP biosynthesis via de novo pathway; AMP from IMP: step 1/2. Plays an important role in the de novo pathway of purine nucleotide biosynthesis. Catalyzes the first committed step in the biosynthesis of AMP from IMP. The chain is Adenylosuccinate synthetase from Listeria monocytogenes serovar 1/2a (strain ATCC BAA-679 / EGD-e).